The following is a 376-amino-acid chain: MTFLMLAVSLAIPLLGAMMLLESPIDPQSFSFKEPPFMFGVLQPNTKLRQAERLFENQLNGPESIVNIGDVLFTGTADGRVVKLENGEIETIARFGSGPCKTRDDEPTCGRPLGIRVGPNGTLFVVDAYKGLFEVNPQKRSVKLLLSSETPIEGKKMSFVNDLTITRDGRKIYFTDSSSKWQRRDYLLLVMEGTDDGRLLEYDTVTKEVKVLLDQLQFPNGVQLSPEEDFVLVAETAMARIRRVYVSGLMKGGADMFVENMPGFPDNIRPSSSGGYWVAAATIRANPGFSMLDFLSDKPFIKRMIFKLFSQETVMKFVPRYSLVLEVSDSGAFRRSLHDPDGQVVTYVSEAHEHDGYLYLGSFRSPFICRLSLQSI.

Residues 1-17 traverse the membrane as a helical segment; the sequence is MTFLMLAVSLAIPLLGA. N-linked (GlcNAc...) asparagine glycosylation is present at asparagine 120.

Belongs to the strictosidine synthase family.

Its subcellular location is the membrane. In terms of biological role, exhibits strong arylesterase activity with beta-naphthyl acetate and phenyl acetate. May play a role in adipocyte differentiation. The sequence is that of Adipocyte plasma membrane-associated protein (Apmap) from Rattus norvegicus (Rat).